Reading from the N-terminus, the 418-residue chain is Tryptophan synthase beta chain 1 (418 aa).

The residue at position 99 (Lys-99) is an N6-(pyridoxal phosphate)lysine.

Belongs to the TrpB family. In terms of assembly, tetramer of two alpha and two beta chains. Requires pyridoxal 5'-phosphate as cofactor.

It carries out the reaction (1S,2R)-1-C-(indol-3-yl)glycerol 3-phosphate + L-serine = D-glyceraldehyde 3-phosphate + L-tryptophan + H2O. It functions in the pathway amino-acid biosynthesis; L-tryptophan biosynthesis; L-tryptophan from chorismate: step 5/5. Functionally, the beta subunit is responsible for the synthesis of L-tryptophan from indole and L-serine. The sequence is that of Tryptophan synthase beta chain 1 (trpB1) from Corynebacterium efficiens (strain DSM 44549 / YS-314 / AJ 12310 / JCM 11189 / NBRC 100395).